We begin with the raw amino-acid sequence, 210 residues long: Isochorismatase domain-containing protein 2 (210 aa).

Serine 7 is subject to Phosphoserine.

Belongs to the isochorismatase family. In terms of assembly, interacts with CDKN2A.

The protein localises to the cytoplasm. It localises to the nucleus. The protein is Isochorismatase domain-containing protein 2 (Isoc2) of Rattus norvegicus (Rat).